The chain runs to 160 residues: Ribonuclease H (160 aa).

Positions 1 to 157 (MNIEIYTDGA…CDRLAVEACQ (157 aa)) constitute an RNase H type-1 domain. 4 residues coordinate Mg(2+): aspartate 8, glutamate 49, aspartate 85, and aspartate 149.

Belongs to the RNase H family. In terms of assembly, monomer. It depends on Mg(2+) as a cofactor.

The protein localises to the cytoplasm. It carries out the reaction Endonucleolytic cleavage to 5'-phosphomonoester.. Its function is as follows. Endonuclease that specifically degrades the RNA of RNA-DNA hybrids. In Treponema denticola (strain ATCC 35405 / DSM 14222 / CIP 103919 / JCM 8153 / KCTC 15104), this protein is Ribonuclease H.